Reading from the N-terminus, the 354-residue chain is Protein Wnt-11 (354 aa).

An N-terminal signal peptide occupies residues 1–24; it reads MKPSPQFLLAAFLSLILQTGICYG. N-linked (GlcNAc...) asparagine glycans are attached at residues Asn-40 and Asn-90. Intrachain disulfides connect Cys-80–Cys-91, Cys-130–Cys-138, Cys-140–Cys-157, Cys-209–Cys-223, Cys-211–Cys-218, Cys-283–Cys-314, Cys-299–Cys-309, Cys-313–Cys-353, Cys-329–Cys-344, Cys-331–Cys-341, and Cys-336–Cys-337. Residue Ser-215 is the site of O-palmitoleoyl serine; by PORCN attachment. Residues Asn-300 and Asn-304 are each glycosylated (N-linked (GlcNAc...) asparagine).

It belongs to the Wnt family. In terms of processing, palmitoleoylation is required for efficient binding to frizzled receptors. Depalmitoleoylation leads to Wnt signaling pathway inhibition.

It is found in the secreted. Its subcellular location is the extracellular space. It localises to the extracellular matrix. Its function is as follows. Ligand for members of the frizzled family of seven transmembrane receptors. May play a role in the formation of dermal structure, both limb and feather buds. Is likely to signal over only few cell diameters. This Coturnix japonica (Japanese quail) protein is Protein Wnt-11 (WNT11).